The sequence spans 453 residues: Serine/threonine-protein phosphatase 2A 55 kDa regulatory subunit B delta isoform (453 aa).

4 WD repeats span residues 32-71 (AEAD…KGRA), 97-138 (EIEE…KRAE), 181-219 (AHTY…RSFN), and 230-270 (ELTE…LCDR). Residue Ser285 is modified to Phosphoserine. WD repeat units follow at residues 289–327 (EIIS…RPVE), 344–385 (ENDC…DVTL), and 420–452 (DFNK…QDKI). A Phosphotyrosine modification is found at Tyr305. Thr308 bears the Phosphothreonine mark.

Belongs to the phosphatase 2A regulatory subunit B family. As to quaternary structure, PP2A consists of a common heterodimeric core enzyme, composed of a 36 kDa catalytic subunit (subunit C) and a 65 kDa constant regulatory subunit (PR65 or subunit A), that associates with a variety of regulatory subunits. Proteins that associate with the core dimer include three families of regulatory subunits B (the R2/B/PR55/B55, R3/B''/PR72/PR130/PR59 and R5/B'/B56 families), the 48 kDa variable regulatory subunit, viral proteins, and cell signaling molecules. Interacts with IER5.

It is found in the cytoplasm. Functionally, substrate-recognition subunit of protein phosphatase 2A (PP2A) that plays a key role in cell cycle by controlling mitosis entry and exit. Involved in chromosome clustering during late mitosis by mediating dephosphorylation of MKI67. The activity of PP2A complexes containing PPP2R2D (PR55-delta) fluctuate during the cell cycle: the activity is high in interphase and low in mitosis. This Mus musculus (Mouse) protein is Serine/threonine-protein phosphatase 2A 55 kDa regulatory subunit B delta isoform.